A 144-amino-acid chain; its full sequence is Transcriptional regulator MraZ (144 aa).

SpoVT-AbrB domains lie at 5–50 (TFNH…ALPQ) and 81–124 (AHEV…DRAA).

It belongs to the MraZ family. In terms of assembly, forms oligomers.

It is found in the cytoplasm. Its subcellular location is the nucleoid. The chain is Transcriptional regulator MraZ from Anaeromyxobacter dehalogenans (strain 2CP-C).